A 327-amino-acid chain; its full sequence is MNSEHPMTDRVVYRSLMADNLRWDALQLRDGDIIISAPSKSGLTWTQRLVSLLVFDGPDLPGPLSTVSPWLDQTIRPIEEVVATLDAQQHRRFIKTHTPLDGLVLDDRVSYICVGRDPRDAAVSMLYQSANMNEDRMRILHEAVVPFHERIAPPPFAELGHARSPTEEFRDWMEGPNQPPPGIGFTHLKGIGTLANILHQLGTVWVRRHLPNVALFHYADYQADLAGELLRLARVLGIAATRDRARDLAQYATLDAMRSRASEIAPNTTDGIWHSDERFFRRGGSGDWQQFFTEAEHLRYYHRINQLAPPDLLAWAHEGRRGYDPAN.

40 to 45 contributes to the 3'-phosphoadenylyl sulfate binding site; sequence KSGLTW. H97 functions as the Proton acceptor in the catalytic mechanism. Position 116–124 (116–124) interacts with 3'-phosphoadenylyl sulfate; sequence RDPRDAAVS.

It belongs to the sulfotransferase 1 family.

Its function is as follows. Involved in the synthesis of cell wall sulfolipids. This chain is Glycolipid sulfotransferase BCG_1434, found in Mycobacterium bovis (strain BCG / Pasteur 1173P2).